Reading from the N-terminus, the 359-residue chain is Protein mab-21-like 2 (359 aa).

The protein belongs to the mab-21 family.

The protein localises to the nucleus. Its subcellular location is the cytoplasm. Its function is as follows. Required for eye morphogenesis. May promote the survival of proliferating retinal progenitor cells. The sequence is that of Protein mab-21-like 2 (mab21l2) from Danio rerio (Zebrafish).